We begin with the raw amino-acid sequence, 192 residues long: Putative integrase/recombinase y4gC (192 aa).

The region spanning 1 to 183 is the Tyr recombinase domain; it reads MPSILERDQI…ATEDLRAIAL (183 aa). Active-site residues include arginine 41, lysine 66, histidine 135, arginine 138, and histidine 161. The active-site O-(3'-phospho-DNA)-tyrosine intermediate is tyrosine 170.

This sequence belongs to the 'phage' integrase family.

The chain is Putative integrase/recombinase y4gC from Sinorhizobium fredii (strain NBRC 101917 / NGR234).